Reading from the N-terminus, the 96-residue chain is Secreted RxLR effector protein 123 (96 aa).

Positions 1 to 22 (MVGAYYVGIALLVAGGSQTAAG) are cleaved as a signal peptide. The short motif at 49-70 (RFLRKSRNPKDNLMLSEANEER) is the RxLR-dEER element. The tract at residues 57-96 (PKDNLMLSEANEERTPSSPSNSLTEFIVSEPITTNVMRTE) is disordered. Residues 87–96 (PITTNVMRTE) are compositionally biased toward polar residues.

Belongs to the RxLR effector family.

Its subcellular location is the secreted. The protein localises to the host nucleus. It localises to the host cytoplasm. In terms of biological role, secreted effector that dos not suppress the host cell death induced by cell death-inducing proteins. This is Secreted RxLR effector protein 123 from Plasmopara viticola (Downy mildew of grapevine).